The primary structure comprises 203 residues: Transmembrane protein 269 (203 aa).

The next 3 helical transmembrane spans lie at 60-80 (GLASALLLGVDGLLSGILAII), 124-144 (FILCCMASLMILFMMDQSYYP), and 157-177 (LVYIGGVIMLFFSPLSLSAFY).

The protein localises to the membrane. This is Transmembrane protein 269 from Homo sapiens (Human).